The sequence spans 191 residues: Small ribosomal subunit protein uS5 (191 aa).

Residues 1–20 are disordered; that stretch reads MAAERERGGRERSRDREERD. Residues 23–86 form the S5 DRBM domain; that stretch reads FVDKLVHINR…EAAKRNLTRV (64 aa).

This sequence belongs to the universal ribosomal protein uS5 family. In terms of assembly, part of the 30S ribosomal subunit. Contacts proteins S4 and S8.

With S4 and S12 plays an important role in translational accuracy. Functionally, located at the back of the 30S subunit body where it stabilizes the conformation of the head with respect to the body. The protein is Small ribosomal subunit protein uS5 of Rhodopseudomonas palustris (strain HaA2).